A 247-amino-acid chain; its full sequence is 3-deoxy-manno-octulosonate cytidylyltransferase (247 aa).

Belongs to the KdsB family.

Its subcellular location is the cytoplasm. The enzyme catalyses 3-deoxy-alpha-D-manno-oct-2-ulosonate + CTP = CMP-3-deoxy-beta-D-manno-octulosonate + diphosphate. Its pathway is nucleotide-sugar biosynthesis; CMP-3-deoxy-D-manno-octulosonate biosynthesis; CMP-3-deoxy-D-manno-octulosonate from 3-deoxy-D-manno-octulosonate and CTP: step 1/1. It functions in the pathway bacterial outer membrane biogenesis; lipopolysaccharide biosynthesis. In terms of biological role, activates KDO (a required 8-carbon sugar) for incorporation into bacterial lipopolysaccharide in Gram-negative bacteria. The sequence is that of 3-deoxy-manno-octulosonate cytidylyltransferase from Methylobacterium sp. (strain 4-46).